The primary structure comprises 141 residues: Hemoglobin subunit alpha-D (141 aa).

The Globin domain occupies 1-141 (VLTAEDRRLL…VADVLCEKYR (141 aa)). 2 residues coordinate heme b: Gln-58 and His-87.

Belongs to the globin family. As to quaternary structure, heterotetramer of two alpha chains and two beta chains. As to expression, red blood cells.

Its function is as follows. Involved in oxygen transport from the lung to the various peripheral tissues. This Drymarchon melanurus erebennus (Texas indigo snake) protein is Hemoglobin subunit alpha-D.